A 169-amino-acid chain; its full sequence is N-alpha-acetyltransferase 50 (169 aa).

The N-acetyltransferase domain maps to 6 to 155 (IELGDVTPHN…DAHVLQKNLK (150 aa)). Threonine 12 carries the phosphothreonine modification. Tyrosine 31 is a binding site for substrate. N6-acetyllysine is present on residues lysine 34 and lysine 37. Residue tyrosine 73 is part of the active site. Methionine 75 is a substrate binding site. Acetyl-CoA is bound at residue 77 to 90 (LGCLAPYRRLGIGT). Tyrosine 110 carries the post-translational modification Phosphotyrosine. The active site involves histidine 112. 117-126 (NESAIDFYRK) provides a ligand contact to CoA. Residues 138–141 (YYKR) are substrate. Lysine 140 bears the N6-acetyllysine mark.

Belongs to the acetyltransferase family. GNAT subfamily. In terms of assembly, component of the N-terminal acetyltransferase E (NatE) complex at least composed of NAA10, NAA15 and NAA50. Interacts with NAA10. Interacts with NAA15. Predominantly interacts with NAA15 in the N-terminal acetyltransferase A complex (NatA complex); the interactions reduce the acetylation activity of the NatA complex. Component of the N-terminal acetyltransferase E (NatE)/HYPK complex at least composed of NAA10, NAA15, NAA50 and HYPK. Within the complex interacts with NAA15. Its capacity to interact with the NatA complex is reduced by HYPK. Interacts with NAA35.

It localises to the cytoplasm. Its subcellular location is the nucleus. It carries out the reaction N-terminal L-methionyl-L-alanyl-[protein] + acetyl-CoA = N-terminal N(alpha)-acetyl-L-methionyl-L-alanyl-[protein] + CoA + H(+). The catalysed reaction is N-terminal L-methionyl-L-seryl-[protein] + acetyl-CoA = N-terminal N(alpha)-acetyl-L-methionyl-L-seryl-[protein] + CoA + H(+). It catalyses the reaction N-terminal L-methionyl-L-valyl-[protein] + acetyl-CoA = N-terminal N(alpha)-acetyl-L-methionyl-L-valyl-[protein] + CoA + H(+). The enzyme catalyses N-terminal L-methionyl-L-threonyl-[protein] + acetyl-CoA = N-terminal N(alpha)-acetyl-L-methionyl-L-threonyl-[protein] + CoA + H(+). It carries out the reaction N-terminal L-methionyl-L-lysyl-[protein] + acetyl-CoA = N-terminal N(alpha)-acetyl-L-methionyl-L-lysyl-[protein] + CoA + H(+). The catalysed reaction is N-terminal L-methionyl-L-leucyl-[protein] + acetyl-CoA = N-terminal N(alpha)-acetyl-L-methionyl-L-leucyl-[protein] + CoA + H(+). It catalyses the reaction N-terminal L-methionyl-L-phenylalanyl-[protein] + acetyl-CoA = N-terminal N(alpha)-acetyl-L-methionyl-L-phenylalanyl-[protein] + CoA + H(+). The enzyme catalyses N-terminal L-methionyl-L-tyrosyl-[protein] + acetyl-CoA = N-terminal N(alpha)-acetyl-L-methionyl-L-tyrosyl-[protein] + CoA + H(+). In terms of biological role, N-alpha-acetyltransferase that acetylates the N-terminus of proteins that retain their initiating methionine. Has a broad substrate specificity: able to acetylate the initiator methionine of most peptides, except for those with a proline in second position. Also displays N-epsilon-acetyltransferase activity by mediating acetylation of the side chain of specific lysines on proteins. Autoacetylates in vivo. The relevance of N-epsilon-acetyltransferase activity is however unclear: able to acetylate H4 in vitro, but this result has not been confirmed in vivo. Component of N-alpha-acetyltransferase complexes containing NAA10 and NAA15, which has N-alpha-acetyltransferase activity. Does not influence the acetyltransferase activity of NAA10. However, it negatively regulates the N-alpha-acetyltransferase activity of the N-terminal acetyltransferase A complex (also called the NatA complex). The multiprotein complexes probably constitute the major contributor for N-terminal acetylation at the ribosome exit tunnel, with NAA10 acetylating all amino termini that are devoid of methionine and NAA50 acetylating other peptides. Required for sister chromatid cohesion during mitosis by promoting binding of CDCA5/sororin to cohesin: may act by counteracting the function of NAA10. This Mus musculus (Mouse) protein is N-alpha-acetyltransferase 50.